A 443-amino-acid polypeptide reads, in one-letter code: Ribosomal protein uS12 methylthiotransferase RimO (443 aa).

An MTTase N-terminal domain is found at 8–118 (PKVGFVSLGC…VVNAVHEVVP (111 aa)). [4Fe-4S] cluster contacts are provided by Cys-17, Cys-53, Cys-82, Cys-151, Cys-155, and Cys-158. Residues 137–375 (LTPRHYAYLK…MAHQQAISAA (239 aa)) form the Radical SAM core domain. One can recognise a TRAM domain in the interval 378 to 443 (QQRIGKEIEV…DEYDMWAEPI (66 aa)).

This sequence belongs to the methylthiotransferase family. RimO subfamily. It depends on [4Fe-4S] cluster as a cofactor.

The protein resides in the cytoplasm. It catalyses the reaction L-aspartate(89)-[ribosomal protein uS12]-hydrogen + (sulfur carrier)-SH + AH2 + 2 S-adenosyl-L-methionine = 3-methylsulfanyl-L-aspartate(89)-[ribosomal protein uS12]-hydrogen + (sulfur carrier)-H + 5'-deoxyadenosine + L-methionine + A + S-adenosyl-L-homocysteine + 2 H(+). Its function is as follows. Catalyzes the methylthiolation of an aspartic acid residue of ribosomal protein uS12. This Pseudomonas entomophila (strain L48) protein is Ribosomal protein uS12 methylthiotransferase RimO.